Reading from the N-terminus, the 822-residue chain is MLNISTNMMINQTLNFDSNQESQKNKTERISKTKLTRELITKTDHDIYVDDISFLQREDNVNVSQIDLTARGVLNPEDQGVLHKSTEFGVFNKNKTGLPASVDLKIKQNSFFSVKQPDFNKYLISDFVEIQRNSFFTLLEKGIIEEFSKRNPITNSKKTMEIFFYPDYYQLTPPEYSPSQAIIKSKSYTSKLYIPVQLTDKSKNIIKLKWVYIGDIPLMTKRGHFILNGCARVIVNQMVRSPGIYYQKKIYENFSNKWSEKPENTFTRYFADLICNRGTWLRIEMDKYNKIWAQMKRVPKIPIMWFLIAVGLTDKIVLKTVMDSKILLYNLDEDPLNPRKKPLPYVKTPPAAWSAIYNIVFAKKIKAQEKAKKMLELTEGNPSSKSQTKNKTSASKKSKTLNVANTKGKTPAENIKTLSELIDLEKALFLKSEQGRKWIFNKFMNPRTYDLGKVGRVNFNRKLKLSISQDITTLTPQDLLAATNNLILVSKGLRELDDIDHLKNRRVRTSGELIQIQIGVGLVRLEKTIREKMTYASGLSSLPSQKFAFRSSKQRNQSPVGDAENATQLTIGNLINTKPFNGALREFFGTSPLSQFMDQINPLAELTHKRRLSSMGPGGVTRDSATLAIRGIHPSHYGRICPVETPEGKNTGLVNSLTAYARVNAAGYIETPFYRVYKGQVQKKTGLYFFSAKQEEKIKLGAPDLYTSEIGFLPKASIPVRIVEDFTKISRNEIQYVGVAPIQMISIATSLIPFFEHDDANRALMGSNMQRQAVPILKPQRPIVGTGLEARAVSDSGHVITAKSSGIVMYTSSKEIIIYSLQ.

Positions 376–408 are disordered; that stretch reads ELTEGNPSSKSQTKNKTSASKKSKTLNVANTKG. Residues 383–393 are compositionally biased toward low complexity; it reads SSKSQTKNKTS.

It belongs to the RNA polymerase beta chain family. As to quaternary structure, in plastids the minimal PEP RNA polymerase catalytic core is composed of four subunits: alpha, beta, beta', and beta''. When a (nuclear-encoded) sigma factor is associated with the core the holoenzyme is formed, which can initiate transcription.

Its subcellular location is the plastid. It localises to the chloroplast. It carries out the reaction RNA(n) + a ribonucleoside 5'-triphosphate = RNA(n+1) + diphosphate. Its function is as follows. DNA-dependent RNA polymerase catalyzes the transcription of DNA into RNA using the four ribonucleoside triphosphates as substrates. The polypeptide is DNA-directed RNA polymerase subunit beta N-terminal section (rpoB1) (Chlamydomonas reinhardtii (Chlamydomonas smithii)).